Consider the following 130-residue polypeptide: Small ribosomal subunit protein uS11 (130 aa).

The protein belongs to the universal ribosomal protein uS11 family. As to quaternary structure, part of the 30S ribosomal subunit. Interacts with proteins S7 and S18. Binds to IF-3.

Located on the platform of the 30S subunit, it bridges several disparate RNA helices of the 16S rRNA. Forms part of the Shine-Dalgarno cleft in the 70S ribosome. In Shewanella frigidimarina (strain NCIMB 400), this protein is Small ribosomal subunit protein uS11.